A 242-amino-acid chain; its full sequence is Ubiquinone/menaquinone biosynthesis C-methyltransferase UbiE (242 aa).

S-adenosyl-L-methionine-binding positions include threonine 69, aspartate 87, and 114 to 115 (NA).

It belongs to the class I-like SAM-binding methyltransferase superfamily. MenG/UbiE family.

The catalysed reaction is a 2-demethylmenaquinol + S-adenosyl-L-methionine = a menaquinol + S-adenosyl-L-homocysteine + H(+). It catalyses the reaction a 2-methoxy-6-(all-trans-polyprenyl)benzene-1,4-diol + S-adenosyl-L-methionine = a 5-methoxy-2-methyl-3-(all-trans-polyprenyl)benzene-1,4-diol + S-adenosyl-L-homocysteine + H(+). It functions in the pathway quinol/quinone metabolism; menaquinone biosynthesis; menaquinol from 1,4-dihydroxy-2-naphthoate: step 2/2. Its pathway is cofactor biosynthesis; ubiquinone biosynthesis. In terms of biological role, methyltransferase required for the conversion of demethylmenaquinol (DMKH2) to menaquinol (MKH2) and the conversion of 2-polyprenyl-6-methoxy-1,4-benzoquinol (DDMQH2) to 2-polyprenyl-3-methyl-6-methoxy-1,4-benzoquinol (DMQH2). The chain is Ubiquinone/menaquinone biosynthesis C-methyltransferase UbiE from Zymomonas mobilis subsp. mobilis (strain ATCC 31821 / ZM4 / CP4).